Reading from the N-terminus, the 377-residue chain is Flagellin C (377 aa).

Coiled-coil stretches lie at residues 103-129 (SNSK…IAET) and 301-340 (VDSH…KDTD).

The protein belongs to the bacterial flagellin family. In terms of assembly, heteromer of multiple flagellin subunits including FlaA, FlaB, FlaC, FlaD and possibly FlaE.

It is found in the secreted. Its subcellular location is the bacterial flagellum. In terms of biological role, flagellin is the subunit protein which polymerizes to form the filaments of bacterial flagella. FlaC is not essential for flagellar synthesis and motility. The protein is Flagellin C (flaC) of Vibrio anguillarum (Listonella anguillarum).